Reading from the N-terminus, the 113-residue chain is UPF0102 protein CHU_0465 (113 aa).

Belongs to the UPF0102 family.

The sequence is that of UPF0102 protein CHU_0465 from Cytophaga hutchinsonii (strain ATCC 33406 / DSM 1761 / CIP 103989 / NBRC 15051 / NCIMB 9469 / D465).